Here is a 378-residue protein sequence, read N- to C-terminus: Acetylornithine deacetylase (378 aa).

Histidine 76 serves as a coordination point for Zn(2+). The active site involves aspartate 78. Aspartate 108 provides a ligand contact to Zn(2+). Glutamate 140 is an active-site residue. Residues glutamate 141, glutamate 165, and histidine 351 each contribute to the Zn(2+) site.

The protein belongs to the peptidase M20A family. ArgE subfamily. In terms of assembly, homodimer. Requires Zn(2+) as cofactor. Co(2+) is required as a cofactor. The cofactor is glutathione.

It localises to the cytoplasm. The catalysed reaction is N(2)-acetyl-L-ornithine + H2O = L-ornithine + acetate. It participates in amino-acid biosynthesis; L-arginine biosynthesis; L-ornithine from N(2)-acetyl-L-ornithine (linear): step 1/1. In terms of biological role, catalyzes the hydrolysis of the amide bond of N(2)-acetylated L-amino acids. Cleaves the acetyl group from N-acetyl-L-ornithine to form L-ornithine, an intermediate in L-arginine biosynthesis pathway, and a branchpoint in the synthesis of polyamines. This chain is Acetylornithine deacetylase, found in Vibrio parahaemolyticus serotype O3:K6 (strain RIMD 2210633).